Consider the following 389-residue polypeptide: Inactive serine/threonine-protein kinase ZRK12 (389 aa).

Positions 41–342 (SADEIRKATN…ETQFDSHQDI (302 aa)) constitute a Protein kinase domain. ATP-binding positions include 47-55 (KATNNFGVS) and Lys84. Tyr129 carries the post-translational modification Phosphotyrosine. Thr214 is modified (phosphothreonine). Tyr222 carries the phosphotyrosine modification.

It belongs to the protein kinase superfamily. Ser/Thr protein kinase family.

Together with RPP13L4/ZAR1, involved in the regulation of the ambient temperature-sensitive intersection of growth and immune response in the absence of pathogens. The chain is Inactive serine/threonine-protein kinase ZRK12 from Arabidopsis thaliana (Mouse-ear cress).